The sequence spans 953 residues: Trafficking kinesin-binding protein 1 (953 aa).

Residues 47–354 (LEEQLPHYKL…EELKNLRNKT (308 aa)) form the HAP1 N-terminal domain. A coiled-coil region spans residues 104–356 (QMTKTYNDID…LKNLRNKTMP (253 aa)). Residues 359–509 (TSRRYHSLGL…RRLSLRRENY (151 aa)) are interaction with HGS. O-linked (GlcNAc) serine glycosylation occurs at S447. Positions 472–495 (AADLGNDERSKKPGTPGTPGSHDL) are disordered. Residues 492–532 (SHDLETALRRLSLRRENYLSERRFFEEEQERKLQELAEKGE) adopt a coiled-coil conformation. Residue S537 is modified to Phosphoserine. The tract at residues 658–672 (PGKCMSQTNSTFTFT) is interaction with OGT. S680 and S719 each carry an O-linked (GlcNAc) serine glycan. S719 is subject to Phosphoserine. Residues 777 to 796 (VIPSTPPNSPMQTPTSSPPS) are disordered. Residues 786-796 (PMQTPTSSPPS) show a composition bias toward low complexity. A Phosphoserine modification is found at S919. O-linked (GlcNAc) threonine glycosylation is present at T935.

The protein belongs to the milton family. Interacts with RHOT1 and RHOT2. Found in a complex with KIF5B, OGT, RHOT1 and RHOT2. Interacts with HGS. Interacts with GABRA1. Interacts with KIF5C. Interacts with OGT; stable interaction is not required for glycosylation of this protein by OGT. Isoform 1 interacts with OGT. O-glycosylated. Glycosylated by OGT; glycosylation in response to increased extracellular glucose levels is required for and leads to regulation of mitochondrial motility by OGT. As to expression, high expression in spinal cord and moderate expression in all other tissues and specific brain regions examined. Expressed in all cell lines examined.

The protein resides in the cytoplasm. It localises to the nucleus. Its subcellular location is the mitochondrion. It is found in the early endosome. The protein localises to the endosome. The protein resides in the mitochondrion membrane. It localises to the cell cortex. Involved in the regulation of endosome-to-lysosome trafficking, including endocytic trafficking of EGF-EGFR complexes and GABA-A receptors. Involved in mitochondrial motility. When O-glycosylated, abolishes mitochondrial motility. Crucial for recruiting OGT to the mitochondrial surface of neuronal processes. TRAK1 and RHOT form an essential protein complex that links KIF5 to mitochondria for light chain-independent, anterograde transport of mitochondria. The chain is Trafficking kinesin-binding protein 1 (TRAK1) from Homo sapiens (Human).